Consider the following 156-residue polypeptide: Small ribosomal subunit protein uS7 (156 aa).

This sequence belongs to the universal ribosomal protein uS7 family. As to quaternary structure, part of the 30S ribosomal subunit. Contacts proteins S9 and S11.

One of the primary rRNA binding proteins, it binds directly to 16S rRNA where it nucleates assembly of the head domain of the 30S subunit. Is located at the subunit interface close to the decoding center, probably blocks exit of the E-site tRNA. This Limosilactobacillus fermentum (strain NBRC 3956 / LMG 18251) (Lactobacillus fermentum) protein is Small ribosomal subunit protein uS7.